Reading from the N-terminus, the 202-residue chain is MGERTGVIVAGGQSTRMGDVDKTVVDVAGVPLVRRVANRLLAVVDHLVVNCRRDQQERLAAALEGLSPTFAVDEVPDRGPTAGIMTGLSTVETPYAAVVAADMPYLDPELLEYLFERADSHDAAVPRPEEWFEPLHAVYRPEPMAEACAEALEAADARIITPLSSLDHIVIERDAIVEHGSLRSFESVDTPEDLERARERLS.

Residues 9 to 11, Lys22, Asn50, Asp77, and Asp102 contribute to the GTP site; that span reads VAG. Residue Asp102 coordinates Mg(2+).

This sequence belongs to the MobA family. Mg(2+) serves as cofactor.

Its subcellular location is the cytoplasm. The enzyme catalyses Mo-molybdopterin + GTP + H(+) = Mo-molybdopterin guanine dinucleotide + diphosphate. In terms of biological role, transfers a GMP moiety from GTP to Mo-molybdopterin (Mo-MPT) cofactor (Moco or molybdenum cofactor) to form Mo-molybdopterin guanine dinucleotide (Mo-MGD) cofactor. The sequence is that of Probable molybdenum cofactor guanylyltransferase from Natronomonas pharaonis (strain ATCC 35678 / DSM 2160 / CIP 103997 / JCM 8858 / NBRC 14720 / NCIMB 2260 / Gabara) (Halobacterium pharaonis).